We begin with the raw amino-acid sequence, 180 residues long: MAQVSGMSDVPDMGRRQFMNLLTFGTITGTALGALYPVVKYFIPPASGGTGGGAVAKDALGNDIKVSEYLAKHLPGDRSLAQGIKGDPTYVIVTEDHQIANYGLNAVCTHLGCVVPWNVSENKFICPCHGSQYDSTGKVVRGPAPLSLALVKATVTEDDKLVFTPWTEIDFRTGKEPWWT.

Residues 21–43 form a helical membrane-spanning segment; it reads LLTFGTITGTALGALYPVVKYFI. The region spanning 66-162 is the Rieske domain; that stretch reads VSEYLAKHLP…ATVTEDDKLV (97 aa). [2Fe-2S] cluster contacts are provided by Cys-108, His-110, Cys-126, and His-129. Residues Cys-113 and Cys-128 are joined by a disulfide bond.

The protein belongs to the Rieske iron-sulfur protein family. In terms of assembly, the 4 large subunits of the cytochrome b6-f complex are cytochrome b6, subunit IV (17 kDa polypeptide, PetD), cytochrome f and the Rieske protein, while the 4 small subunits are PetG, PetL, PetM and PetN. The complex functions as a dimer. [2Fe-2S] cluster serves as cofactor.

It is found in the cellular thylakoid membrane. The catalysed reaction is 2 oxidized [plastocyanin] + a plastoquinol + 2 H(+)(in) = 2 reduced [plastocyanin] + a plastoquinone + 4 H(+)(out). Its function is as follows. Component of the cytochrome b6-f complex, which mediates electron transfer between photosystem II (PSII) and photosystem I (PSI), cyclic electron flow around PSI, and state transitions. This chain is Cytochrome b6-f complex iron-sulfur subunit, found in Thermosynechococcus vestitus (strain NIES-2133 / IAM M-273 / BP-1).